Here is a 288-residue protein sequence, read N- to C-terminus: 2-hydroxy-6-oxononadienedioate/2-hydroxy-6-oxononatrienedioate hydrolase (288 aa).

Residues 39–274 (LVLLHGSGPG…RCGHWAQWEH (236 aa)) form the AB hydrolase-1 domain. The active-site Proton acceptor is His-268.

The protein belongs to the AB hydrolase superfamily. MhpC family. Homodimer.

It catalyses the reaction (2Z,4E)-2-hydroxy-6-oxonona-2,4-dienedioate + H2O = (2Z)-2-hydroxypenta-2,4-dienoate + succinate + H(+). It carries out the reaction (2Z,4E,7E)-2-hydroxy-6-oxonona-2,4,7-trienedioate + H2O = (2Z)-2-hydroxypenta-2,4-dienoate + fumarate + H(+). It participates in aromatic compound metabolism; 3-phenylpropanoate degradation. Functionally, catalyzes the cleavage of the C5-C6 bond of 2-hydroxy-6-oxononadienedioate and 2-hydroxy-6-oxononatrienedioate, a dienol ring fission product of the bacterial meta-cleavage pathway for degradation of phenylpropionic acid. The chain is 2-hydroxy-6-oxononadienedioate/2-hydroxy-6-oxononatrienedioate hydrolase from Paraburkholderia phymatum (strain DSM 17167 / CIP 108236 / LMG 21445 / STM815) (Burkholderia phymatum).